Consider the following 195-residue polypeptide: Ethylene-responsive transcription factor ERF018 (195 aa).

Residues 1 to 13 (MVKQAMKEEEKKR) show a composition bias toward basic and acidic residues. The tract at residues 1–22 (MVKQAMKEEEKKRNTAMQSKYK) is disordered. The AP2/ERF DNA-binding region spans 20–77 (KYKGVRKRKWGKWVSEIRLPHSRERIWLGSYDTPEKAARAFDAAQFCLRGGDANFNFP).

The protein belongs to the AP2/ERF transcription factor family. ERF subfamily.

It is found in the nucleus. Its function is as follows. Probably acts as a transcriptional activator. Binds to the GCC-box pathogenesis-related promoter element. May be involved in the regulation of gene expression by stress factors and by components of stress signal transduction pathways. The chain is Ethylene-responsive transcription factor ERF018 (ERF018) from Arabidopsis thaliana (Mouse-ear cress).